The primary structure comprises 349 residues: Cytoplasmic tRNA 2-thiolation protein 2 (349 aa).

It belongs to the CTU2/NCS2 family.

It localises to the cytoplasm. It functions in the pathway tRNA modification; 5-methoxycarbonylmethyl-2-thiouridine-tRNA biosynthesis. Its function is as follows. Plays a central role in 2-thiolation of mcm(5)S(2)U at tRNA wobble positions of tRNA(Lys), tRNA(Glu) and tRNA(Gln). May act by forming a heterodimer with tut-1/ctu-1 that ligates sulfur from thiocarboxylated urm-1 onto the uridine of tRNAs at wobble position. The polypeptide is Cytoplasmic tRNA 2-thiolation protein 2 (Caenorhabditis elegans).